Consider the following 129-residue polypeptide: Putative CC-type chemokine FPV061 (129 aa).

Belongs to the intercrine beta (chemokine CC) family. Highly divergent.

The chain is Putative CC-type chemokine FPV061 from Fowlpox virus (strain NVSL) (FPV).